The sequence spans 188 residues: ATP synthase subunit delta (188 aa).

The protein belongs to the ATPase delta chain family. F-type ATPases have 2 components, F(1) - the catalytic core - and F(0) - the membrane proton channel. F(1) has five subunits: alpha(3), beta(3), gamma(1), delta(1), epsilon(1). F(0) has three main subunits: a(1), b(2) and c(10-14). The alpha and beta chains form an alternating ring which encloses part of the gamma chain. F(1) is attached to F(0) by a central stalk formed by the gamma and epsilon chains, while a peripheral stalk is formed by the delta and b chains.

It is found in the cell membrane. Its function is as follows. F(1)F(0) ATP synthase produces ATP from ADP in the presence of a proton or sodium gradient. F-type ATPases consist of two structural domains, F(1) containing the extramembraneous catalytic core and F(0) containing the membrane proton channel, linked together by a central stalk and a peripheral stalk. During catalysis, ATP synthesis in the catalytic domain of F(1) is coupled via a rotary mechanism of the central stalk subunits to proton translocation. This protein is part of the stalk that links CF(0) to CF(1). It either transmits conformational changes from CF(0) to CF(1) or is implicated in proton conduction. In Malacoplasma penetrans (strain HF-2) (Mycoplasma penetrans), this protein is ATP synthase subunit delta.